Here is a 414-residue protein sequence, read N- to C-terminus: Ankyrin repeat domain-containing protein 10 (414 aa).

ANK repeat units lie at residues 18 to 47 (TLRFPLHRACRDGDLPALCALLQSAPRSDL), 54 to 83 (YGWTPIHWAAHFGKLECLMQLVRAGASVNA), 88 to 117 (FAQTPAHIAAFGGHPQCLNWLIQVGANINK), 121 to 150 (VGETPIHKAARSGSVDSISALVAHGAQIDL), and 154 to 187 (SGLTAADLAHTQGFQECAQFLLNLQNCHLNRYYS). A disordered region spans residues 310 to 332 (GVTSPSRHRIHTSNGTEEPEKAM).

This chain is Ankyrin repeat domain-containing protein 10 (ANKRD10), found in Gallus gallus (Chicken).